The chain runs to 94 residues: Small ubiquitin-related modifier 3-like (94 aa).

A Glycyl lysine isopeptide (Lys-Gly) (interchain with G-Cter in SUMO) cross-link involves residue lysine 11. In terms of domain architecture, Ubiquitin-like spans 15 to 92 (DHINLKVAGQ…IDVFQQQTGG (78 aa)). Residue glycine 92 forms a Glycyl lysine isopeptide (Gly-Lys) (interchain with K-? in acceptor proteins) linkage. The propeptide occupies 93–94 (SC).

Belongs to the ubiquitin family. SUMO subfamily. As to quaternary structure, interacts with sae2 and ube2i. Covalently attached to a number of proteins. Polymeric chains can be formed through Lys-11 cross-linking. Post-translationally, cleavage of precursor form by a sentrin-specific protease is necessary for function.

The protein localises to the cytoplasm. It localises to the nucleus. Its subcellular location is the PML body. Its function is as follows. Ubiquitin-like protein which can be covalently attached to target lysines either as a monomer or as a lysine-linked polymer. Does not seem to be involved in protein degradation and may function as an antagonist of ubiquitin in the degradation process. Plays a role in a number of cellular processes such as nuclear transport, DNA replication and repair, mitosis and signal transduction. Covalent attachment to its substrates requires prior activation by the E1 complex sae1-sae2 and linkage to the E2 enzyme ube2i. This is Small ubiquitin-related modifier 3-like (sumo3l) from Danio rerio (Zebrafish).